The chain runs to 338 residues: MKVYYDKDADLSLIKKLKVTIVGYGSQGHAHAQNLKDSGVNVTIGARKEGSSFAKAVNAGHEVKEIKEAVTGADVVMVLLPDETMAEIYHAEIEPNLKKGAALAFAHGFNIHYNQIVPSKDLDVIMIAPKGPGHTVRSEYLKGGGVPSLIAVYQDASGKAKDIALSYAAANGGTKGGVIETNFREETETDLFGEQAVLCGGAVELVKAGFETLVEAGYAPEMAYFECLHELKLIVDLMYEGGIANMNYSISNNAEYGEYVTGPRVIADQARAAMKECLKNIQNGDYAKQFILEGRTGYPSMTARRRLNAAHPIEQVGSQLRAMMPWIAKNKLVDQSKN.

In terms of domain architecture, KARI N-terminal Rossmann spans 1–181 (MKVYYDKDAD…GGTKGGVIET (181 aa)). NADP(+) contacts are provided by residues 24 to 27 (YGSQ), Arg47, and Ser52. His107 is an active-site residue. Gly133 contributes to the NADP(+) binding site. Residues 182–327 (NFREETETDL…SQLRAMMPWI (146 aa)) enclose the KARI C-terminal knotted domain. Residues Asp190, Glu194, Glu226, and Glu230 each contribute to the Mg(2+) site. Ser251 lines the substrate pocket.

Belongs to the ketol-acid reductoisomerase family. Mg(2+) serves as cofactor.

It catalyses the reaction (2R)-2,3-dihydroxy-3-methylbutanoate + NADP(+) = (2S)-2-acetolactate + NADPH + H(+). The enzyme catalyses (2R,3R)-2,3-dihydroxy-3-methylpentanoate + NADP(+) = (S)-2-ethyl-2-hydroxy-3-oxobutanoate + NADPH + H(+). Its pathway is amino-acid biosynthesis; L-isoleucine biosynthesis; L-isoleucine from 2-oxobutanoate: step 2/4. It participates in amino-acid biosynthesis; L-valine biosynthesis; L-valine from pyruvate: step 2/4. Its function is as follows. Involved in the biosynthesis of branched-chain amino acids (BCAA). Catalyzes an alkyl-migration followed by a ketol-acid reduction of (S)-2-acetolactate (S2AL) to yield (R)-2,3-dihydroxy-isovalerate. In the isomerase reaction, S2AL is rearranged via a Mg-dependent methyl migration to produce 3-hydroxy-3-methyl-2-ketobutyrate (HMKB). In the reductase reaction, this 2-ketoacid undergoes a metal-dependent reduction by NADPH to yield (R)-2,3-dihydroxy-isovalerate. In Methylobacillus flagellatus (strain ATCC 51484 / DSM 6875 / VKM B-1610 / KT), this protein is Ketol-acid reductoisomerase (NADP(+)).